The sequence spans 369 residues: MSIEKPFFGDDSNRGVSINGGRYVQYNVYGNLFEVSKKYVPPLRPIGRGASGIVCAAWNSETGEEVAIKKIGNAFGNIIDAKRTLREIKLLKHMDHDNVIAIIDIIRPPQPDNFNDVHIVYELMDTDLHHIIRSNQPLTDDHSRFFLYQLLRGLKYVHSANVLHRDLKPSNLLLNANCDLKIGDFGLARTKSETDFMTEYVVTRWYRAPELLLNCSEYTAAIDIWSVGCILGEIMTREPLFPGRDYVQQLRLITELIGSPDDSSLGFLRSDNARRYVRQLPQYPRQNFAARFPNMSVNAVDLLQKMLVFDPNRRITVDEALCHPYLAPLHEYNEEPVCVRPFHFDFEQPSLTEENIKELIYRESVKFNP.

The Protein kinase domain maps to 40 to 326 (VPPLRPIGRG…VDEALCHPYL (287 aa)). ATP is bound by residues 46–54 (IGRGASGIV) and lysine 69. Catalysis depends on aspartate 166, which acts as the Proton acceptor. Threonine 198 is subject to Phosphothreonine. The short motif at 198–200 (TEY) is the TXY element. Tyrosine 200 is subject to Phosphotyrosine. Threonine 203 is subject to Phosphothreonine.

This sequence belongs to the protein kinase superfamily. CMGC Ser/Thr protein kinase family. MAP kinase subfamily. In terms of assembly, interacts with MKK1, MKK2 and MKK6. Post-translationally, dually phosphorylated on Thr-198 and Tyr-200, which activates the enzyme.

The enzyme catalyses L-seryl-[protein] + ATP = O-phospho-L-seryl-[protein] + ADP + H(+). It carries out the reaction L-threonyl-[protein] + ATP = O-phospho-L-threonyl-[protein] + ADP + H(+). Activated by threonine and tyrosine phosphorylation. The polypeptide is Mitogen-activated protein kinase 11 (MPK11) (Arabidopsis thaliana (Mouse-ear cress)).